A 251-amino-acid polypeptide reads, in one-letter code: 7-cyano-7-deazaguanine synthase (251 aa).

The segment at 1–21 (MSDLPRHSPRRQHAGESAVTA) is disordered. An ATP-binding site is contributed by 35–45 (YSGGMDSYTVL). Zn(2+) contacts are provided by C212, C220, C223, and C226.

Belongs to the QueC family. The cofactor is Zn(2+).

It carries out the reaction 7-carboxy-7-deazaguanine + NH4(+) + ATP = 7-cyano-7-deazaguanine + ADP + phosphate + H2O + H(+). It participates in purine metabolism; 7-cyano-7-deazaguanine biosynthesis. Functionally, catalyzes the ATP-dependent conversion of 7-carboxy-7-deazaguanine (CDG) to 7-cyano-7-deazaguanine (preQ(0)). The protein is 7-cyano-7-deazaguanine synthase of Chromohalobacter salexigens (strain ATCC BAA-138 / DSM 3043 / CIP 106854 / NCIMB 13768 / 1H11).